Reading from the N-terminus, the 360-residue chain is Peptide chain release factor 1 (360 aa).

Glutamine 236 carries the post-translational modification N5-methylglutamine.

Belongs to the prokaryotic/mitochondrial release factor family. Post-translationally, methylated by PrmC. Methylation increases the termination efficiency of RF1.

The protein resides in the cytoplasm. In terms of biological role, peptide chain release factor 1 directs the termination of translation in response to the peptide chain termination codons UAG and UAA. In Ligilactobacillus salivarius (strain UCC118) (Lactobacillus salivarius), this protein is Peptide chain release factor 1.